Consider the following 476-residue polypeptide: Bifunctional protein HldE (476 aa).

Positions 1 to 319 (MKVSLPAFEK…EALALHHGES (319 aa)) are ribokinase. Residue 195–198 (NMSE) coordinates ATP. Asp-264 is a catalytic residue. Positions 345-476 (MTNGCFDILH…AIIQNIMAKQ (132 aa)) are cytidylyltransferase.

In the N-terminal section; belongs to the carbohydrate kinase PfkB family. The protein in the C-terminal section; belongs to the cytidylyltransferase family. As to quaternary structure, homodimer.

The catalysed reaction is D-glycero-beta-D-manno-heptose 7-phosphate + ATP = D-glycero-beta-D-manno-heptose 1,7-bisphosphate + ADP + H(+). The enzyme catalyses D-glycero-beta-D-manno-heptose 1-phosphate + ATP + H(+) = ADP-D-glycero-beta-D-manno-heptose + diphosphate. The protein operates within nucleotide-sugar biosynthesis; ADP-L-glycero-beta-D-manno-heptose biosynthesis; ADP-L-glycero-beta-D-manno-heptose from D-glycero-beta-D-manno-heptose 7-phosphate: step 1/4. It participates in nucleotide-sugar biosynthesis; ADP-L-glycero-beta-D-manno-heptose biosynthesis; ADP-L-glycero-beta-D-manno-heptose from D-glycero-beta-D-manno-heptose 7-phosphate: step 3/4. Catalyzes the phosphorylation of D-glycero-D-manno-heptose 7-phosphate at the C-1 position to selectively form D-glycero-beta-D-manno-heptose-1,7-bisphosphate. Functionally, catalyzes the ADP transfer from ATP to D-glycero-beta-D-manno-heptose 1-phosphate, yielding ADP-D-glycero-beta-D-manno-heptose. This is Bifunctional protein HldE from Shewanella sp. (strain ANA-3).